Reading from the N-terminus, the 421-residue chain is Tyrosine--tRNA ligase 1 (421 aa).

An L-tyrosine-binding site is contributed by Tyr-35. Positions 40–49 match the 'HIGH' region motif; it reads PTADSLHIGH. L-tyrosine contacts are provided by Tyr-170 and Gln-174. A 'KMSKS' region motif is present at residues 231 to 235; that stretch reads KFGKT. Lys-234 is an ATP binding site. The region spanning 354–420 is the S4 RNA-binding domain; that stretch reads LPLVEILVQS…GKKKYFLLTY (67 aa).

The protein belongs to the class-I aminoacyl-tRNA synthetase family. TyrS type 1 subfamily. As to quaternary structure, homodimer.

It is found in the cytoplasm. The catalysed reaction is tRNA(Tyr) + L-tyrosine + ATP = L-tyrosyl-tRNA(Tyr) + AMP + diphosphate + H(+). In terms of biological role, catalyzes the attachment of tyrosine to tRNA(Tyr) in a two-step reaction: tyrosine is first activated by ATP to form Tyr-AMP and then transferred to the acceptor end of tRNA(Tyr). This Bacillus licheniformis (strain ATCC 14580 / DSM 13 / JCM 2505 / CCUG 7422 / NBRC 12200 / NCIMB 9375 / NCTC 10341 / NRRL NRS-1264 / Gibson 46) protein is Tyrosine--tRNA ligase 1.